Consider the following 219-residue polypeptide: Thiopurine S-methyltransferase (219 aa).

Positions 10, 45, 66, and 130 each coordinate S-adenosyl-L-methionine.

It belongs to the class I-like SAM-binding methyltransferase superfamily. TPMT family.

The protein resides in the cytoplasm. It catalyses the reaction S-adenosyl-L-methionine + a thiopurine = S-adenosyl-L-homocysteine + a thiopurine S-methylether.. This chain is Thiopurine S-methyltransferase, found in Psychrobacter cryohalolentis (strain ATCC BAA-1226 / DSM 17306 / VKM B-2378 / K5).